The following is a 190-amino-acid chain: MPPRPRFDRRAPVRELPNINERIKYPQLRVVDSDGKQLGVIDRLKALEIASQRELDLVLVSEKANPPVCRIMDYGKYKFEQEKKAKEARKKSHQTEVKEVKMRYKIDKHDYDVRIGQATKFLKSGDKVKCTVIFRGREIQHSNLAETLLLRMANDLEEQSEVQQKPKREGRNMIMFLSPRKTPLIKKDDA.

This sequence belongs to the IF-3 family. Monomer.

It is found in the cytoplasm. Its function is as follows. IF-3 binds to the 30S ribosomal subunit and shifts the equilibrium between 70S ribosomes and their 50S and 30S subunits in favor of the free subunits, thus enhancing the availability of 30S subunits on which protein synthesis initiation begins. The chain is Translation initiation factor IF-3 from Prochlorococcus marinus (strain MIT 9301).